The primary structure comprises 73 residues: Large ribosomal subunit protein bL31 (73 aa).

4 residues coordinate Zn(2+): Cys-16, Cys-18, Cys-37, and Cys-40.

It belongs to the bacterial ribosomal protein bL31 family. Type A subfamily. In terms of assembly, part of the 50S ribosomal subunit. The cofactor is Zn(2+).

In terms of biological role, binds the 23S rRNA. The chain is Large ribosomal subunit protein bL31 from Pseudomonas fluorescens (strain ATCC BAA-477 / NRRL B-23932 / Pf-5).